A 273-amino-acid polypeptide reads, in one-letter code: Large ribosomal subunit protein uL2 (273 aa).

The disordered stretch occupies residues 196–273 (GNSDHGLESS…SSKYIIERRK (78 aa)). Basic residues-rich tracts occupy residues 209–220 (GRTRWMGRRPRN) and 255–264 (LKTRAPKKQS).

The protein belongs to the universal ribosomal protein uL2 family. As to quaternary structure, part of the 50S ribosomal subunit. Forms a bridge to the 30S subunit in the 70S ribosome.

One of the primary rRNA binding proteins. Required for association of the 30S and 50S subunits to form the 70S ribosome, for tRNA binding and peptide bond formation. It has been suggested to have peptidyltransferase activity; this is somewhat controversial. Makes several contacts with the 16S rRNA in the 70S ribosome. In Phocaeicola vulgatus (strain ATCC 8482 / DSM 1447 / JCM 5826 / CCUG 4940 / NBRC 14291 / NCTC 11154) (Bacteroides vulgatus), this protein is Large ribosomal subunit protein uL2.